Consider the following 332-residue polypeptide: D-2-hydroxyacid dehydrogenase (NAD(+)) (332 aa).

Residues arginine 237 and glutamate 266 contribute to the active site. Catalysis depends on histidine 298, which acts as the Proton donor.

Belongs to the D-isomer specific 2-hydroxyacid dehydrogenase family. Monomer.

The enzyme catalyses a (2R)-2-hydroxycarboxylate + NAD(+) = a 2-oxocarboxylate + NADH + H(+). It catalyses the reaction (2R)-hydroxy-4-methylpentanoate + NAD(+) = 4-methyl-2-oxopentanoate + NADH + H(+). It participates in amino-acid degradation; L-leucine degradation. Involved in the reductive branch of L-leucine fermentation. Catalyzes the NADH-dependent reduction of 4-methyl-2-oxopentanoate (2-oxoisocaproate) to (R)-2-hydroxy-4-methylpentanoate ((R)-2-hydroxyisocaproate). For the reverse reaction, the enzyme accepts (R)- but not (S)-2-hydroxy-4-methylpentanoate. Can also use 2-oxopentanoate, 2-oxohexanoate and phenylpyruvate but not 2-oxoisovalerate and 2-oxobutyrate. Cannot use NADPH. The chain is D-2-hydroxyacid dehydrogenase (NAD(+)) from Clostridioides difficile (Peptoclostridium difficile).